A 174-amino-acid chain; its full sequence is MPLRPARCYTHFSGPPYTRREYIPGVPQPKIVKFEMGNVHGDYDYRAELVMIEAGQIRHNALEAARVMANKYLSSTVGDQNYFLKIRVYPHHVLRENKMMAFAGADRLQDGMRQAFGKPIGTAARVYPGTIVMEVRVRKEHVEHAKEALRRAASKLPLPARIVFKPLKPGLKPI.

It belongs to the universal ribosomal protein uL16 family.

This is Large ribosomal subunit protein uL16 from Staphylothermus marinus (strain ATCC 43588 / DSM 3639 / JCM 9404 / F1).